The sequence spans 169 residues: NADH dehydrogenase [ubiquinone] 1 alpha subcomplex assembly factor 2 (169 aa).

The disordered stretch occupies residues 116-169 (TSEELLPPPVQTQIKGHASAPYFGKEEPSVAPSSTGKTFQPGSWMPRDGKSHNQ). Ser-134 carries the post-translational modification Phosphoserine. Residues 146–156 (APSSTGKTFQP) are compositionally biased toward polar residues.

It belongs to the complex I NDUFA12 subunit family. Interacts with ARMC9. In terms of tissue distribution, highly expressed in ESCC cells. Also expressed in heart, skeletal muscle, liver, and in fibroblasts.

The protein resides in the mitochondrion. Its function is as follows. Acts as a molecular chaperone for mitochondrial complex I assembly. Complex I functions in the transfer of electrons from NADH to the respiratory chain. The immediate electron acceptor for the enzyme is believed to be ubiquinone. Is involved in the initial steps of cilia formation, including removal of CP110 from the mother centrioles, docking of membrane vesicles to the mother centrioles, and establishment of the transition zone. This is NADH dehydrogenase [ubiquinone] 1 alpha subcomplex assembly factor 2 (NDUFAF2) from Homo sapiens (Human).